A 1320-amino-acid polypeptide reads, in one-letter code: MEFPQQPQQQRPAGDGKITYPLGVKEITDKISNDEVVKRLKLVVKTYMDMDQDSEEEKQQYLALALHLASEFFLRNPNKDVRLLVACCLADIFRIYAPEAPYTSHDKLKEIFLFITRQLKGLEDTKSPQFNRYFYLLENLAWVKSYNICFELEDCNEIFIQLFKTLFSVINNSHNQKVQMHMLDLMSSIIMEGDGVTQELLDTILINLIPAHKNLNKQAYDLARTLLKRTVQTIETCIASFFNQVLVMGKSSVSDLSEHVFDLIQELFAIDPLLLVSVMPQLEFKLKSNDGEERLAVVKLLAKLFGAKDSELATQNRPLWQCFLGRFNDIHVPVRLECVKFASHCLMNHPDLAKDLTEFLKVRSHDPEEAIRHDVIVTIINAGKKDLNLVNDQLLGFVRERMLDKRWRVRKEAMMGLAQLFKKYCLHHEAGKESALKISWIKDKLLHIYYQNSIDDKLLVEKIFAQYMVPHSLETEEKMKCLYYLYACLDTNAVKALNEMWKCQNMLRGLVRELLDLHKLPTSEANTSAMFGKLMTIAKNLPDPGKAQDFMKKFNQVLGEDEKLRLQLEQLISPTCSCKQAEQCVREITRKLTFPKQPTNPFLEMVKFLLERIAPVHIDSEAISALVKLLNKSIEGTADDEDEGVTPDTAIRAGLELLKVLSFTHPTAFHSAETYESLLQCLKMEDDKVAEAAIQIFRNTGQKIETELPQIRSTLIPILHQKAKRGTPHQAKQAVHCIHAIFHNKEVQLAQIFEPLSRSLNADVPEQLITPLVSLGHISMLAPDQFASPMKSIVANFIVKDLLMNDRSVGNKNGRLWTADDEVSPEVLAKVQAIKLLVRWLLGMKNNQSKSANSTLRLPSAMLVSEGDLTEQKKISKSDMSRLRLAAGSAILKLAQEPCYHDIITPEQFQLCGLVINDECYQVRQIYAQKLHVALVKLLLPLEYMAVFALCAKDPVKERRAHARQCLLKNISVRREYIKQNPMAHEKLLSLLPEYVVPYMIHLLAHDPDLTKPQDLEQLRDVKECLWFMLEVLMTKNENNSHSFLRKMVENIKQTKDAQCPDDPKANEKLYIVCDVALFVIANKSTSCHLDSPKDPVLPSKFYTPPDKEFVNDKEYLSAEAKIVLQTGKIQQPPKQTGVLGAVNKPLTVTARRPYIKTFTSETGSNASTNSQPSSPATNKSRDVSSEVGARENEENPVITKAVSVKKEEAAQPSGRKRAAPASDGTENSVSSNPSAGSQPPLNKPRRGRPPKNSAGAATQEKEAGATTGAGAGRGRKRAAPSQDPSSTASTDALSDKTPKQQKEAEPKRAAPQRQIDLQR.

HEAT repeat units lie at residues 156-195, 272-310, 388-426, 709-747, and 990-1028; these read NEIF…EGDG, PLLL…AKDS, NLVN…KYCL, PQIR…NKEV, and SLLP…CLWF. Residues 1158–1179 are compositionally biased toward polar residues; that stretch reads TFTSETGSNASTNSQPSSPATN. Residues 1158–1320 are disordered; sequence TFTSETGSNA…APQRQIDLQR (163 aa). Positions 1180 to 1194 are enriched in basic and acidic residues; that stretch reads KSRDVSSEVGARENE. A compositionally biased stretch (polar residues) spans 1225–1241; the sequence is GTENSVSSNPSAGSQPP. A compositionally biased stretch (low complexity) spans 1255–1267; that stretch reads AGAATQEKEAGAT. Residues 1283-1293 show a composition bias toward polar residues; that stretch reads QDPSSTASTDA. A compositionally biased stretch (basic and acidic residues) spans 1294–1309; the sequence is LSDKTPKQQKEAEPKR.

Belongs to the PDS5 family. In terms of assembly, interacts with the cohesin complex. Binds chromatin in a cohesin-dependent manner.

The protein localises to the nucleus. May regulate sister chromatid cohesion during mitosis and couple it to DNA replication. The polypeptide is Sister chromatid cohesion protein PDS5 homolog A (Danio rerio (Zebrafish)).